Consider the following 183-residue polypeptide: Inner membrane-spanning protein YciB (183 aa).

Transmembrane regions (helical) follow at residues L19 to V39, I53 to F73, W76 to F96, L121 to F141, and T151 to P171.

Belongs to the YciB family.

It is found in the cell inner membrane. In terms of biological role, plays a role in cell envelope biogenesis, maintenance of cell envelope integrity and membrane homeostasis. The protein is Inner membrane-spanning protein YciB of Actinobacillus pleuropneumoniae serotype 7 (strain AP76).